Here is a 142-residue protein sequence, read N- to C-terminus: Secreted RxLR effector protein 161 (142 aa).

The first 27 residues, 1-27 (MKNVPYLSAVGAIMYLMVVTRPDLAAA), serve as a signal peptide directing secretion. The RxLR signature appears at 48 to 51 (RVLR).

The protein belongs to the RxLR effector family.

It localises to the secreted. It is found in the host chloroplast envelope. Its subcellular location is the host nucleus. Its function is as follows. Secreted effector that completely suppresses the host cell death induced by cell death-inducing proteins. The polypeptide is Secreted RxLR effector protein 161 (Plasmopara viticola (Downy mildew of grapevine)).